Here is a 68-residue protein sequence, read N- to C-terminus: Serine rich endogenous peptide 22 (68 aa).

Positions 1-25 (MNKALVWLITLLFLIFSATPNRVLA) are cleaved as a signal peptide. Positions 50–64 (KIGVGASNSGHSPGA) match the SCOOP motif motif. Residues 56-58 (SNS) carry the SxS motif essential for MIK2 binding motif.

This sequence belongs to the serine rich endogenous peptide (SCOOP) phytocytokine family. Interacts with MIK2 (via extracellular leucine-rich repeat domain); this interaction triggers the formation of complex between MIK2 and the BAK1/SERK3 and SERK4 coreceptors, and subsequent BAK1 activation by phosphorylation.

It localises to the cell membrane. The protein resides in the secreted. The protein localises to the extracellular space. It is found in the apoplast. Functionally, brassicaceae-specific phytocytokine (plant endogenous peptide released into the apoplast) perceived by MIK2 in a BAK1/SERK3 and SERK4 coreceptors-dependent manner, that modulates various physiological and antimicrobial processes including growth prevention and reactive oxygen species (ROS) response regulation. The protein is Serine rich endogenous peptide 22 of Arabidopsis thaliana (Mouse-ear cress).